The following is a 131-amino-acid chain: Large ribosomal subunit protein bL19 (131 aa).

Belongs to the bacterial ribosomal protein bL19 family.

This protein is located at the 30S-50S ribosomal subunit interface and may play a role in the structure and function of the aminoacyl-tRNA binding site. In Anaeromyxobacter dehalogenans (strain 2CP-C), this protein is Large ribosomal subunit protein bL19.